A 129-amino-acid chain; its full sequence is Small ribosomal subunit protein uS11 (129 aa).

This sequence belongs to the universal ribosomal protein uS11 family. Part of the 30S ribosomal subunit. Interacts with proteins S7 and S18. Binds to IF-3.

In terms of biological role, located on the platform of the 30S subunit, it bridges several disparate RNA helices of the 16S rRNA. Forms part of the Shine-Dalgarno cleft in the 70S ribosome. The sequence is that of Small ribosomal subunit protein uS11 from Sphingopyxis alaskensis (strain DSM 13593 / LMG 18877 / RB2256) (Sphingomonas alaskensis).